The primary structure comprises 113 residues: Ribulose bisphosphate carboxylase small subunit (113 aa).

The protein belongs to the RuBisCO small chain family. As to quaternary structure, heterohexadecamer of 8 large and 8 small subunits. Forms a CsoS2-CsoS1-RuBisCO complex.

It is found in the carboxysome. RuBisCO catalyzes two reactions: the carboxylation of D-ribulose 1,5-bisphosphate, the primary event in carbon dioxide fixation, as well as the oxidative fragmentation of the pentose substrate in the photorespiration process. Both reactions occur simultaneously and in competition at the same active site. Although the small subunit is not catalytic it is essential for maximal activity. In Prochlorococcus marinus (strain MIT 9313), this protein is Ribulose bisphosphate carboxylase small subunit.